Reading from the N-terminus, the 490-residue chain is Polyamine oxidase 2 (490 aa).

The FAD site is built by E57, R65, V246, and E433. The Microbody targeting signal motif lies at 488 to 490; it reads SRL.

The protein belongs to the flavin monoamine oxidase family. The cofactor is FAD. As to expression, highly expressed in flowers and siliques. Also found in leaf and stem and in low levels in cotyledons, roots and in seedlings.

Its subcellular location is the peroxisome. It carries out the reaction spermine + O2 + H2O = 3-aminopropanal + spermidine + H2O2. It catalyses the reaction N(1)-acetylspermine + O2 + H2O = 3-acetamidopropanal + spermidine + H2O2. The enzyme catalyses spermidine + O2 + H2O = 3-aminopropanal + putrescine + H2O2. Its pathway is amine and polyamine degradation; spermine degradation. It functions in the pathway amine and polyamine degradation; spermidine degradation. Its function is as follows. Flavoenzyme involved in polyamine back-conversion. Catalyzes the oxidation of the secondary amino group of polyamines, such as spermine, spermidine and their acetyl derivatives. Substrate preference is N(1)-acetylspermine &gt; spermine &gt; spermidine. Plays an important role in the regulation of polyamine intracellular concentration. Involved in abscisic acid-mediated developmental processes. May contribute to nitric oxide-mediated effects on root growth. This Arabidopsis thaliana (Mouse-ear cress) protein is Polyamine oxidase 2.